We begin with the raw amino-acid sequence, 155 residues long: Transcriptional repressor NrdR (155 aa).

The segment at 3–34 is a zinc-finger region; it reads CPYCGHLEDRVVDSRETQDGQATRRRRACLSC. The ATP-cone domain maps to 49-139; the sequence is PQVVKKDGRR…VYRAFRDVGE (91 aa).

It belongs to the NrdR family. The cofactor is Zn(2+).

Negatively regulates transcription of bacterial ribonucleotide reductase nrd genes and operons by binding to NrdR-boxes. This chain is Transcriptional repressor NrdR, found in Anaeromyxobacter dehalogenans (strain 2CP-1 / ATCC BAA-258).